Consider the following 167-residue polypeptide: Leptin (167 aa).

The signal sequence occupies residues 1 to 21 (MHCVPLFCFLWFCHHLYYSQA). A disulfide bridge links C117 with C167.

Belongs to the leptin family.

The protein localises to the secreted. In terms of biological role, key player in the regulation of energy balance and body weight control. Once released into the circulation, has central and peripheral effects by binding LEPR, found in many tissues, which results in the activation of several major signaling pathways. In the hypothalamus, acts as an appetite-regulating factor that induces a decrease in food intake and an increase in energy consumption by inducing anorexinogenic factors and suppressing orexigenic neuropeptides, also regulates bone mass and secretion of hypothalamo-pituitary-adrenal hormones. In the periphery, increases basal metabolism, influences reproductive function, regulates pancreatic beta-cell function and insulin secretion, is pro-angiogenic for endothelial cell and affects innate and adaptive immunity. In the arcuate nucleus of the hypothalamus, activates by depolarization POMC neurons inducing FOS and SOCS3 expression to release anorexigenic peptides and inhibits by hyperpolarization NPY neurons inducing SOCS3 with a consequent reduction on release of orexigenic peptides. In addition to its known satiety inducing effect, has a modulatory role in nutrient absorption. In the intestine, reduces glucose absorption by enterocytes by activating PKC and leading to a sequential activation of p38, PI3K and ERK signaling pathways which exerts an inhibitory effect on glucose absorption. Acts as a growth factor on certain tissues, through the activation of different signaling pathways increases expression of genes involved in cell cycle regulation such as CCND1, via JAK2-STAT3 pathway, or VEGFA, via MAPK1/3 and PI3K-AKT1 pathways. May also play an apoptotic role via JAK2-STAT3 pathway and up-regulation of BIRC5 expression. Pro-angiogenic, has mitogenic activity on vascular endothelial cells and plays a role in matrix remodeling by regulating the expression of matrix metalloproteinases (MMPs) and tissue inhibitors of metalloproteinases (TIMPs). In innate immunity, modulates the activity and function of neutrophils by increasing chemotaxis and the secretion of oxygen radicals. Increases phagocytosis by macrophages and enhances secretion of pro-inflammatory mediators. Increases cytotoxic ability of NK cells. Plays a pro-inflammatory role, in synergy with IL1B, by inducing NOS2 which promotes the production of IL6, IL8 and Prostaglandin E2, through a signaling pathway that involves JAK2, PI3K, MAP2K1/MEK1 and MAPK14/p38. In adaptive immunity, promotes the switch of memory T-cells towards T helper-1 cell immune responses. Increases CD4(+)CD25(-) T-cell proliferation and reduces autophagy during TCR (T-cell receptor) stimulation, through MTOR signaling pathway activation and BCL2 up-regulation. The chain is Leptin (LEP) from Sminthopsis crassicaudata (Fat-tailed dunnart).